A 96-amino-acid chain; its full sequence is uncharacterized protein (96 aa).

This is an uncharacterized protein from Escherichia coli (strain K12).